The sequence spans 449 residues: Heterogeneous nuclear ribonucleoprotein H (449 aa).

Met-1 carries the N-acetylmethionine modification. Met-2 carries the N-acetylmethionine; in Heterogeneous nuclear ribonucleoprotein H, N-terminally processed modification. Residues 11–90 (FVVKVRGLPW…RYVEVFKSNN (80 aa)) form the RRM 1 domain. The residue at position 23 (Ser-23) is a Phosphoserine. Residue Lys-35 forms a Glycyl lysine isopeptide (Lys-Gly) (interchain with G-Cter in SUMO2) linkage. 2 positions are modified to phosphoserine: Ser-54 and Ser-63. Glycyl lysine isopeptide (Lys-Gly) (interchain with G-Cter in SUMO2) cross-links involve residues Lys-87 and Lys-98. An RRM 2 domain is found at 111–188 (GFVRLRGLPF…RYIEIFKSSR (78 aa)). A Dimethylated arginine; alternate modification is found at Arg-233. An Omega-N-methylarginine; alternate modification is found at Arg-233. Residues 234-249 (GAYGGGYGGYDDYNGY) form a 1-1 repeat. The segment at 234–433 (GAYGGGYGGY…YGGQSSMSGY (200 aa)) is 2 X 16 AA Gly-rich approximate repeats. A Phosphotyrosine modification is found at Tyr-246. The region spanning 289 to 364 (HCVHMRGLPY…RYVELFLNST (76 aa)) is the RRM 3 domain. A Phosphoserine modification is found at Ser-310. 3 tandem repeats follow at residues 354-372 (HRYVELFLNSTAGASGGAY), 374-392 (HRYVELFLNSTAGASGGAY), and 418-433 (GGYGGGYGGQSSMSGY). Residues 354–392 (HRYVELFLNSTAGASGGAYEHRYVELFLNSTAGASGGAY) form a 2 X 19 AA perfect repeats region.

In terms of assembly, part of a ternary complex containing FUBP2, PTBP1, PTBP2 and HNRNPH1. Identified in the spliceosome C complex. Interacts with IGF2BP1. Interacts with CUGBP1; the interaction is RNA-dependent. Interacts with MBNL1; the interaction in RNA-independent.

The protein localises to the nucleus. It localises to the nucleoplasm. Its function is as follows. This protein is a component of the heterogeneous nuclear ribonucleoprotein (hnRNP) complexes which provide the substrate for the processing events that pre-mRNAs undergo before becoming functional, translatable mRNAs in the cytoplasm. Mediates pre-mRNA alternative splicing regulation. Inhibits, together with CUGBP1, insulin receptor (IR) pre-mRNA exon 11 inclusion in myoblast. Binds to the IR RNA. Binds poly(RG). The chain is Heterogeneous nuclear ribonucleoprotein H (Hnrnph1) from Rattus norvegicus (Rat).